Here is a 155-residue protein sequence, read N- to C-terminus: Small ribosomal subunit protein bS16 (155 aa).

The segment at 100–155 is disordered; sequence EAGIPDPAPSTEEPAAVCEASAEMAGQPGEVEPAGAAAEPNSQEPEPEEEKPQVEA. Positions 124–143 are enriched in low complexity; that stretch reads AGQPGEVEPAGAAAEPNSQE.

Belongs to the bacterial ribosomal protein bS16 family.

The polypeptide is Small ribosomal subunit protein bS16 (Synechococcus sp. (strain JA-3-3Ab) (Cyanobacteria bacterium Yellowstone A-Prime)).